The chain runs to 226 residues: UPF0173 metal-dependent hydrolase Msed_2125 (226 aa).

This sequence belongs to the UPF0173 family.

The protein is UPF0173 metal-dependent hydrolase Msed_2125 of Metallosphaera sedula (strain ATCC 51363 / DSM 5348 / JCM 9185 / NBRC 15509 / TH2).